A 226-amino-acid polypeptide reads, in one-letter code: Reticulon-like protein B16 (226 aa).

The Reticulon domain maps to 41–224; the sequence is AADLLLWRRR…RLSWSLSKDK (184 aa). A run of 3 helical transmembrane segments spans residues 54-74, 75-95, and 149-169; these read LGVIIISTVAWLIFEFSGLPF, LSVSSDVLLIVIMISFVHARV, and VVICLWLLSAIGSYISLCTLL.

It localises to the endoplasmic reticulum membrane. This Arabidopsis thaliana (Mouse-ear cress) protein is Reticulon-like protein B16 (RTNLB16).